Consider the following 140-residue polypeptide: Neurotrophin-7 (140 aa).

A propeptide spanning residues 1–7 is cleaved from the precursor; it reads PGPRVRR. 3 cysteine pairs are disulfide-bonded: Cys-21-Cys-101, Cys-64-Cys-129, and Cys-89-Cys-131.

Belongs to the NGF-beta family.

It is found in the secreted. The protein is Neurotrophin-7 (ntf7) of Cyprinus carpio (Common carp).